We begin with the raw amino-acid sequence, 181 residues long: Large ribosomal subunit protein bL17 (181 aa).

Residues 129 to 181 (AEKSEKSAKTAKAAKAPAKKATAKKASTKAVAAKKKAVKKAQKKDRAASAARA) are disordered. Over residues 145-171 (PAKKATAKKASTKAVAAKKKAVKKAQK) the composition is skewed to basic residues.

Belongs to the bacterial ribosomal protein bL17 family. As to quaternary structure, part of the 50S ribosomal subunit. Contacts protein L32.

This is Large ribosomal subunit protein bL17 from Bdellovibrio bacteriovorus (strain ATCC 15356 / DSM 50701 / NCIMB 9529 / HD100).